The chain runs to 1402 residues: MNQELATNPLNPLAAPRQFDEIKISLASPEEILAWSYGEVKKPETINYRTFKPERDGLFCARIFGPIKDYECLCGKYKRMKYRGLVCEKCGVEVTLQKVRRERMGHIELAAPVAHIWFLKSLPSRIGLMLDMTLRDLERILYFENYVVIEPGLTDLSYGQLLTEEEFLDAQDQYGADAFTANIGAEAIREMLANIDLAATAEQLREELKEATGELKPKKIIKRLKIVESFLESGNRPEWMVLTVIPVIPPELRPLVPLDGGRFATSDLNDLYRRVINRNNRLKRLIELRAPDIIVRNEKRMLQESVDALFDNGRRGRVITGNNKRPLKSLSDMLKGKQGRFRQNLLGKRVDFSGRSVIVTGPELKLHQCGLPKKMALELFKPFIYSRLEAKGLSSTVKQAKKLVEKERPEVWDILDEVIREHPVLLNRAPTLHRLGIQAFEPILIEGKAIQLHPLVCSAFNADFDGDQMAVHVPLSLEAQLEARVLMMSTNNVLSPANGAPIIVPSQDMVLGLYYTTMEREGMKGEGMAFTSLEEVEHALASGAVHLHARITARLPQIDENGNEVITRFETTPGRLRLGALLPKNAKAPFELVNRLLRKKDIQNVIDTVYRYCGQKESVIFCDQIMGLGFREAFRAGISFGKDDMVVPPTKWDLVEETQDQVKQFEQQYLDGLITQGEKYNKVVDAWSKCNDRVTDAMMKTISATKKDEKGAELEPNSVYMMAHSGARGSVSQMKQLGGMRGLMAKPNGEIIETPIISNFKEGLTVLEYFNSTHGARKGLSDTALKTANSGYLTRRLVDVAQDCIIREHDCGTDHAITASAAVNDGEVVSPLSERVLGRVAAEDVLVPGEDVVIVRKNELIDERKADEIEAAGVQNVRIRSALTCESDDGVCALCYGRDLARGTLVNIGEAVGIIAAQSIGEPGTQLTMRTFHIGGIAQGGQQSFIAAAQEGTVAFENESTLENANGELIVMSRNMQLHIKSATGDTLASHKLFYGSKLFVREGDAVARGQKMFEWDPYTLPIIAEKAGVAKYVDLISGISVRDETDDATGMTQKIVTDWRSAPKGNELKPEIIIVDQDGEPVRNEQGNPVTYPMSVEAILSVEDGQEIKAGDVVARIPREGAKTKDITGGLPRVAELFEARRPKDHAIIAEIDGYVRFGKDYKNKRRIAIEPADDTLEPVEYMVPKGKHIPVQEGDFVQKGDYIMDGNPAPHDILRIMGIEALADYLIDEVQDVYRLQGVKINDKHIEVIVRQMLQKIEILDSGDTTLLKGEHVDRDEFEEENAKIEAKGGRQATGEPVLLGITKASLQTRSFISAASFQETTRVLTEAAVQGKRDKLVGLKENVIVGRLIPAGTGGATARVRRIATDRDQEVIEARRAEAEAAAALIAPEDTPAEVGGED.

Residues C72, C74, C87, and C90 each contribute to the Zn(2+) site. Residues D463, D465, and D467 each contribute to the Mg(2+) site. Residues C811, C885, C892, and C895 each contribute to the Zn(2+) site.

It belongs to the RNA polymerase beta' chain family. The RNAP catalytic core consists of 2 alpha, 1 beta, 1 beta' and 1 omega subunit. When a sigma factor is associated with the core the holoenzyme is formed, which can initiate transcription. The cofactor is Mg(2+). Zn(2+) is required as a cofactor.

It catalyses the reaction RNA(n) + a ribonucleoside 5'-triphosphate = RNA(n+1) + diphosphate. In terms of biological role, DNA-dependent RNA polymerase catalyzes the transcription of DNA into RNA using the four ribonucleoside triphosphates as substrates. The chain is DNA-directed RNA polymerase subunit beta' from Paracoccus denitrificans (strain Pd 1222).